The primary structure comprises 169 residues: ALK and LTK ligand 2a (169 aa).

The first 25 residues, 1–25, serve as a signal peptide directing secretion; sequence MRALRAPVLVMGLVLLICTAAQSDA. The segment at 45–68 is disordered; sequence ENSADDESAQKTESAPEPKDTHHL. Basic and acidic residues predominate over residues 52-67; the sequence is SAQKTESAPEPKDTHH. Cystine bridges form between C130/C166 and C144/C153.

Belongs to the ALKAL family. In terms of assembly, homodimer. As to expression, expressed at high level in the notochord and iridophore stripes of the trunk, as well as in the eye and swim bladder.

Its subcellular location is the secreted. It localises to the cell membrane. In terms of biological role, cytokine that acts as a physiological ligand for receptor tyrosine kinases LTK and ALK. Required for neural crest cell differentiation and iridophore development during embryonic iridophore development and adult stripe development by acting as a receptor for LTK. This is ALK and LTK ligand 2a from Danio rerio (Zebrafish).